The chain runs to 391 residues: Stearoyl-[acyl-carrier-protein] 9-desaturase 6, chloroplastic (391 aa).

A chloroplast-targeting transit peptide spans M1–V38. Residues E130, E168, H171, E221, E254, and H257 each contribute to the Fe cation site.

This sequence belongs to the fatty acid desaturase type 2 family. Homodimer. Fe(2+) serves as cofactor.

The protein localises to the plastid. It localises to the chloroplast. It catalyses the reaction octadecanoyl-[ACP] + 2 reduced [2Fe-2S]-[ferredoxin] + O2 + 2 H(+) = (9Z)-octadecenoyl-[ACP] + 2 oxidized [2Fe-2S]-[ferredoxin] + 2 H2O. The protein operates within lipid metabolism; fatty acid metabolism. In terms of biological role, converts stearoyl-ACP to oleoyl-ACP by introduction of a cis double bond between carbons 9 and 10 of the acyl chain. This is Stearoyl-[acyl-carrier-protein] 9-desaturase 6, chloroplastic (S-ACP-DES6) from Arabidopsis thaliana (Mouse-ear cress).